A 261-amino-acid polypeptide reads, in one-letter code: Adenosylcobinamide-GDP ribazoletransferase (261 aa).

Helical transmembrane passes span 12–32, 46–66, 67–87, 120–140, and 199–219; these read NLFF…WVVI, LVGL…QLIL, PASI…GAFH, GALS…ELAL, and IFVL…TLWL.

It belongs to the CobS family. Mg(2+) is required as a cofactor.

The protein resides in the cell inner membrane. It carries out the reaction alpha-ribazole + adenosylcob(III)inamide-GDP = adenosylcob(III)alamin + GMP + H(+). It catalyses the reaction alpha-ribazole 5'-phosphate + adenosylcob(III)inamide-GDP = adenosylcob(III)alamin 5'-phosphate + GMP + H(+). It functions in the pathway cofactor biosynthesis; adenosylcobalamin biosynthesis; adenosylcobalamin from cob(II)yrinate a,c-diamide: step 7/7. Its function is as follows. Joins adenosylcobinamide-GDP and alpha-ribazole to generate adenosylcobalamin (Ado-cobalamin). Also synthesizes adenosylcobalamin 5'-phosphate from adenosylcobinamide-GDP and alpha-ribazole 5'-phosphate. This chain is Adenosylcobinamide-GDP ribazoletransferase, found in Shewanella frigidimarina (strain NCIMB 400).